We begin with the raw amino-acid sequence, 932 residues long: Glycine dehydrogenase (decarboxylating) (932 aa).

Lysine 685 is modified (N6-(pyridoxal phosphate)lysine).

Belongs to the GcvP family. As to quaternary structure, the glycine cleavage system is composed of four proteins: P, T, L and H. Requires pyridoxal 5'-phosphate as cofactor.

The enzyme catalyses N(6)-[(R)-lipoyl]-L-lysyl-[glycine-cleavage complex H protein] + glycine + H(+) = N(6)-[(R)-S(8)-aminomethyldihydrolipoyl]-L-lysyl-[glycine-cleavage complex H protein] + CO2. Functionally, the glycine cleavage system catalyzes the degradation of glycine. The P protein binds the alpha-amino group of glycine through its pyridoxal phosphate cofactor; CO(2) is released and the remaining methylamine moiety is then transferred to the lipoamide cofactor of the H protein. The polypeptide is Glycine dehydrogenase (decarboxylating) (Brucella suis biovar 1 (strain 1330)).